The chain runs to 115 residues: Kunitz-type trypsin inhibitor 1 (115 aa).

Belongs to the protease inhibitor I3 (leguminous Kunitz-type inhibitor) family.

In terms of biological role, exhibits Kunitz trypsin protease inhibitor activity. This Selenicereus undatus (Pitahaya) protein is Kunitz-type trypsin inhibitor 1.